Consider the following 140-residue polypeptide: Protein NrdI (140 aa).

This sequence belongs to the NrdI family.

In terms of biological role, probably involved in ribonucleotide reductase function. The protein is Protein NrdI of Ruegeria sp. (strain TM1040) (Silicibacter sp.).